A 481-amino-acid chain; its full sequence is MADKITSRQEDYSQWYIDLVRSAKLADYSDVRGCMVIRPNGYAIWEKMQAALDGMFKQTGHVNAYFPMFIPESFIAKEAEHIEGFAPECAVVTHGGGEELAEKLYVRPTSETIIWSSYKKWIQSYRDLPILINQWANVVRWEMRTRLFLRTTEFLWQEGHTAHATPEEAQEEVIRMINIYRTFAEEYMAMPVIVGKKSESEKFAGADATYCIEAMMQDGKALQAGTSHNLGQNFAKAFDCQFQTKDGVLDYVWATSWGVSTRLIGALIMAHSDDKGLVLPPKLASRQVVIIPILKGNKDEVRARARFIAKTLNRHGIPTFVDDSENNSPGWKFAEYELQGIPVRIELGPRDLEQGKCIVARRDTFEKTELLLDDELTINIEEILNNIQQNLYDRALQFRLDNTVEATTWEEFKASVEKGFVIAHWDGTHETEALIKEETKATIRVIPTDEEYRQQYNMDEPGTCIRSGKPAAQKVVFAKAY.

The protein belongs to the class-II aminoacyl-tRNA synthetase family. ProS type 3 subfamily. In terms of assembly, homodimer.

It is found in the cytoplasm. It catalyses the reaction tRNA(Pro) + L-proline + ATP = L-prolyl-tRNA(Pro) + AMP + diphosphate. In terms of biological role, catalyzes the attachment of proline to tRNA(Pro) in a two-step reaction: proline is first activated by ATP to form Pro-AMP and then transferred to the acceptor end of tRNA(Pro). This chain is Proline--tRNA ligase, found in Chlorobaculum tepidum (strain ATCC 49652 / DSM 12025 / NBRC 103806 / TLS) (Chlorobium tepidum).